A 286-amino-acid chain; its full sequence is DNA-directed RNA polymerase subunit Rpo3 (286 aa).

Belongs to the archaeal Rpo3/eukaryotic RPB3 RNA polymerase subunit family. Part of the RNA polymerase complex.

The protein localises to the cytoplasm. The catalysed reaction is RNA(n) + a ribonucleoside 5'-triphosphate = RNA(n+1) + diphosphate. DNA-dependent RNA polymerase (RNAP) catalyzes the transcription of DNA into RNA using the four ribonucleoside triphosphates as substrates. The chain is DNA-directed RNA polymerase subunit Rpo3 from Aeropyrum pernix (strain ATCC 700893 / DSM 11879 / JCM 9820 / NBRC 100138 / K1).